A 278-amino-acid chain; its full sequence is Large ribosomal subunit protein uL24m (278 aa).

Positions Phe109–Asp142 constitute a KOW domain.

It belongs to the universal ribosomal protein uL24 family.

It localises to the mitochondrion. The polypeptide is Large ribosomal subunit protein uL24m (mrpl-24) (Caenorhabditis briggsae).